Reading from the N-terminus, the 310-residue chain is Olfactory receptor 4C16 (310 aa).

At Met1–Lys23 the chain is on the extracellular side. A glycan (N-linked (GlcNAc...) asparagine) is linked at Asn6. Residues Ile24–Val47 form a helical membrane-spanning segment. The Cytoplasmic portion of the chain corresponds to Lys48–Asn55. Residues Pro56–Pro77 form a helical membrane-spanning segment. The Extracellular portion of the chain corresponds to Arg78–Gln98. A disulfide bridge links Cys95 with Cys187. Residues Val99–Val118 traverse the membrane as a helical segment. At Asp119–Trp137 the chain is on the cytoplasmic side. A helical transmembrane segment spans residues Val138–Val156. Residues Gln157 to Val193 are Extracellular-facing. Residues Asn194 to Val217 traverse the membrane as a helical segment. The Cytoplasmic segment spans residues Ile218–Lys233. The helical transmembrane segment at Ala234 to Tyr256 threads the bilayer. Residues Thr257–Lys267 are Extracellular-facing. Residues Met268–Leu287 form a helical membrane-spanning segment. The Cytoplasmic portion of the chain corresponds to Lys288 to Arg310.

Belongs to the G-protein coupled receptor 1 family.

It is found in the cell membrane. Its function is as follows. Odorant receptor. This is Olfactory receptor 4C16 (OR4C16) from Homo sapiens (Human).